Here is a 165-residue protein sequence, read N- to C-terminus: Small ribosomal subunit protein uS5 (165 aa).

The region spanning 10-73 (LVEKLVAVDR…EAARRNMITV (64 aa)) is the S5 DRBM domain.

Belongs to the universal ribosomal protein uS5 family. As to quaternary structure, part of the 30S ribosomal subunit. Contacts proteins S4 and S8.

Functionally, with S4 and S12 plays an important role in translational accuracy. In terms of biological role, located at the back of the 30S subunit body where it stabilizes the conformation of the head with respect to the body. The polypeptide is Small ribosomal subunit protein uS5 (Acinetobacter baylyi (strain ATCC 33305 / BD413 / ADP1)).